The following is a 242-amino-acid chain: Small ribosomal subunit protein uS2 (242 aa).

Belongs to the universal ribosomal protein uS2 family.

This chain is Small ribosomal subunit protein uS2, found in Vibrio campbellii (strain ATCC BAA-1116).